We begin with the raw amino-acid sequence, 352 residues long: Nicotinate-nucleotide--dimethylbenzimidazole phosphoribosyltransferase (352 aa).

Glutamate 316 functions as the Proton acceptor in the catalytic mechanism.

This sequence belongs to the CobT family.

The enzyme catalyses 5,6-dimethylbenzimidazole + nicotinate beta-D-ribonucleotide = alpha-ribazole 5'-phosphate + nicotinate + H(+). It participates in nucleoside biosynthesis; alpha-ribazole biosynthesis; alpha-ribazole from 5,6-dimethylbenzimidazole: step 1/2. Functionally, catalyzes the synthesis of alpha-ribazole-5'-phosphate from nicotinate mononucleotide (NAMN) and 5,6-dimethylbenzimidazole (DMB). This Yersinia enterocolitica serotype O:8 / biotype 1B (strain NCTC 13174 / 8081) protein is Nicotinate-nucleotide--dimethylbenzimidazole phosphoribosyltransferase.